The chain runs to 58 residues: Photosystem II reaction center protein K (58 aa).

Positions 1–21 are excised as a propeptide; sequence MLNMISTFFDSSSNFSEAFLA. A helical membrane pass occupies residues 29–49; that stretch reads IFDPIVDVMPIIPVFFLLLAF.

This sequence belongs to the PsbK family. PSII is composed of 1 copy each of membrane proteins PsbA, PsbB, PsbC, PsbD, PsbE, PsbF, PsbH, PsbI, PsbJ, PsbK, PsbL, PsbM, PsbT, PsbX, PsbY, PsbZ, Psb30/Ycf12, at least 3 peripheral proteins of the oxygen-evolving complex and a large number of cofactors. It forms dimeric complexes.

The protein localises to the plastid. The protein resides in the chloroplast thylakoid membrane. In terms of biological role, one of the components of the core complex of photosystem II (PSII). PSII is a light-driven water:plastoquinone oxidoreductase that uses light energy to abstract electrons from H(2)O, generating O(2) and a proton gradient subsequently used for ATP formation. It consists of a core antenna complex that captures photons, and an electron transfer chain that converts photonic excitation into a charge separation. In Chaetosphaeridium globosum (Charophycean green alga), this protein is Photosystem II reaction center protein K.